A 179-amino-acid chain; its full sequence is Large ribosomal subunit protein uL5 (179 aa).

This sequence belongs to the universal ribosomal protein uL5 family. Part of the 50S ribosomal subunit; part of the 5S rRNA/L5/L18/L25 subcomplex. Contacts the 5S rRNA and the P site tRNA. Forms a bridge to the 30S subunit in the 70S ribosome.

This is one of the proteins that bind and probably mediate the attachment of the 5S RNA into the large ribosomal subunit, where it forms part of the central protuberance. In the 70S ribosome it contacts protein S13 of the 30S subunit (bridge B1b), connecting the 2 subunits; this bridge is implicated in subunit movement. Contacts the P site tRNA; the 5S rRNA and some of its associated proteins might help stabilize positioning of ribosome-bound tRNAs. This chain is Large ribosomal subunit protein uL5, found in Prochlorococcus marinus (strain MIT 9312).